Here is a 640-residue protein sequence, read N- to C-terminus: (Z)-beta-ocimene synthase TPS13PK, chloroplastic (640 aa).

Residues 1-95 (MAALVSTVSS…PFKDEAYVKR (95 aa)) constitute a chloroplast transit peptide. The disordered stretch occupies residues 50–69 (MSTNNNNNNNQKNSSRRSAN). Residues 60–69 (QKNSSRRSAN) are compositionally biased toward polar residues. (2E)-geranyl diphosphate contacts are provided by arginine 334, aspartate 371, aspartate 375, arginine 515, and aspartate 518. Residues aspartate 371 and aspartate 375 each contribute to the Mg(2+) site. A DDXXD motif motif is present at residues 371-375 (DDIYD). Residues aspartate 518, threonine 522, and glutamate 526 each contribute to the Mg(2+) site.

The protein belongs to the terpene synthase family. In terms of assembly, monomer. Mg(2+) is required as a cofactor.

Its subcellular location is the plastid. The protein resides in the chloroplast. The enzyme catalyses (2E)-geranyl diphosphate = (Z)-beta-ocimene + diphosphate. It functions in the pathway secondary metabolite biosynthesis; terpenoid biosynthesis. Its function is as follows. Involved in monoterpene (C10) olefins biosynthesis, constituants of cannabinoids and terpenoids-rich resins. Catalyzes mainly the conversion of (2E)-geranyl diphosphate to (Z)-beta-ocimene. The polypeptide is (Z)-beta-ocimene synthase TPS13PK, chloroplastic (Cannabis sativa (Hemp)).